The chain runs to 91 residues: Cell division protein ZapA (91 aa).

Residues 58 to 91 adopt a coiled-coil conformation; the sequence is LTAVNIASEYLKLKEEYNRLREQLKKEKDGERDD.

This sequence belongs to the ZapA family. Type 2 subfamily. As to quaternary structure, homodimer. Interacts with FtsZ.

The protein resides in the cytoplasm. Activator of cell division through the inhibition of FtsZ GTPase activity, therefore promoting FtsZ assembly into bundles of protofilaments necessary for the formation of the division Z ring. It is recruited early at mid-cell but it is not essential for cell division. The chain is Cell division protein ZapA from Geobacillus kaustophilus (strain HTA426).